The chain runs to 406 residues: Probable sodium/metabolite cotransporter BASS1, chloroplastic (406 aa).

The N-terminal 64 residues, M1–R64, are a transit peptide targeting the chloroplast. 9 consecutive transmembrane segments (helical) span residues V98–L118, A123–M143, L152–V172, P187–V209, V217–L237, M252–L272, G278–L298, L315–L335, and V376–W396.

It belongs to the bile acid:sodium symporter (BASS) (TC 2.A.28) family.

Its subcellular location is the membrane. It localises to the plastid. The protein resides in the chloroplast envelope. May function as sodium-coupled metabolite transporter across the chloroplast envelope. The protein is Probable sodium/metabolite cotransporter BASS1, chloroplastic (BASS1) of Oryza sativa subsp. japonica (Rice).